A 71-amino-acid polypeptide reads, in one-letter code: UPF0346 protein SSU05_1322 (71 aa).

The protein belongs to the UPF0346 family.

In Streptococcus suis (strain 05ZYH33), this protein is UPF0346 protein SSU05_1322.